Reading from the N-terminus, the 127-residue chain is MADSRDDLAESLQNLFTSVSSMVKSELQGTNNHLDLLEKMNLRVASEYDDMGDVAAGLRVFAEQMKSKSGGLDEFVGQMDAIEKQVSEFEAVISVLDRYVSVLESKIRAEYRHPHHQRRSNDSVVTD.

This sequence belongs to the BLOC1S2 family. As to quaternary structure, component of the biogenesis of lysosome-related organelles complex-1 (BLOC-1). Interacts with BLOS1 and SNX1.

The protein localises to the cytoplasm. It localises to the endosome. In terms of biological role, component of the biogenesis of lysosome-related organelles complex-1 (BLOC-1), a complex that mediates the vacuolar degradative transport via the intracellular vesicle trafficking from the endosome to the vacuole. The sequence is that of Biogenesis of lysosome-related organelles complex 1 subunit 2 (BLOS2) from Arabidopsis thaliana (Mouse-ear cress).